A 405-amino-acid chain; its full sequence is Obg-like ATPase homolog (405 aa).

An OBG-type G domain is found at 17–283; sequence PTSGIVGLAN…CKGIASEYFD (267 aa). ATP is bound by residues 26 to 31 and Val-231; that span reads NVGKST. The TGS domain occupies 312–398; that stretch reads NLISFFTCGP…QDNDIALFKA (87 aa).

It belongs to the TRAFAC class OBG-HflX-like GTPase superfamily. OBG GTPase family.

The protein localises to the mitochondrion. In terms of biological role, hydrolyzes ATP, and can also hydrolyze GTP with lower efficiency. Has lower affinity for GTP. The protein is Obg-like ATPase homolog (YLF2) of Saccharomyces cerevisiae (strain ATCC 204508 / S288c) (Baker's yeast).